The chain runs to 186 residues: Testis-expressed protein 36 (186 aa).

The disordered stretch occupies residues 1-52 (MTKGRRFNPPSDKDGRWFPHIGLTQKTPESITSATSKEPQSPHLPRQAEGKL). Residues 24–39 (TQKTPESITSATSKEP) are compositionally biased toward polar residues.

The protein is Testis-expressed protein 36 (TEX36) of Homo sapiens (Human).